Consider the following 372-residue polypeptide: L-selectin (372 aa).

Residues 1-28 (MVFPWRCQSAQRGSWSFLKLWIRTLLCC) form the signal peptide. Residues 29-38 (DLLPHHGTHC) constitute a propeptide that is removed on maturation. Residues 39–332 (WTYHYSERSM…FSKIKEGDYN (294 aa)) lie on the Extracellular side of the membrane. In terms of domain architecture, C-type lectin spans 55–155 (KFCKHNYTDL…ACHKRKAALC (101 aa)). Intrachain disulfides connect C57–C155, C128–C147, C128–C160, C160–C171, C165–C180, C182–C191, C197–C241, C227–C254, C259–C303, and C289–C316. Residues N60 and N104 are each glycosylated (N-linked (GlcNAc...) asparagine). E118, N120, E126, N143, and D144 together coordinate Ca(2+). An EGF-like domain is found at 156 to 192 (YTASCQPESCNRHGECVETINNNTCICDPGYYGPQCQ). Residue N177 is glycosylated (N-linked (GlcNAc...) asparagine). Sushi domains lie at 195 to 256 (IQCE…ICQV) and 257 to 318 (IQCM…ICQK). Residues N226, N246, and N278 are each glycosylated (N-linked (GlcNAc...) asparagine). The helical transmembrane segment at 333–355 (PLFIPVAVMVTAFSGLAFIIWLA) threads the bilayer. The Cytoplasmic portion of the chain corresponds to 356–372 (RRLKKGKKSQERMDDPY).

It belongs to the selectin/LECAM family. In terms of assembly, interaction with SELPLG/PSGL1 and PODXL2 is required for promoting recruitment and rolling of leukocytes. This interaction is dependent on the sialyl Lewis X glycan modification of SELPLG and PODXL2, and tyrosine sulfation modifications of SELPLG. Sulfation on 'Tyr-51' of SELPLG is important for L-selectin binding. Post-translationally, N-glycosylated. As to expression, expressed in peripheral blood mononuclear cells (PBMC), spleen and thymus.

It is found in the cell membrane. Calcium-dependent lectin that mediates cell adhesion by binding to glycoproteins on neighboring cells. Mediates the adherence of lymphocytes to endothelial cells of high endothelial venules in peripheral lymph nodes. Promotes initial tethering and rolling of leukocytes in endothelia. The chain is L-selectin (Sell) from Rattus norvegicus (Rat).